Consider the following 521-residue polypeptide: ATP synthase subunit beta (521 aa).

2 stretches are compositionally biased toward low complexity: residues 1 to 21 (MAKA…AAKA) and 28 to 42 (PKTT…TKSG). The tract at residues 1 to 42 (MAKAATPKTTAAAEAKPAAKAPAKKAAPKTTAAAKPAATKSG) is disordered. ATP is bound at residue 199–206 (GGAGVGKT).

It belongs to the ATPase alpha/beta chains family. F-type ATPases have 2 components, CF(1) - the catalytic core - and CF(0) - the membrane proton channel. CF(1) has five subunits: alpha(3), beta(3), gamma(1), delta(1), epsilon(1). CF(0) has three main subunits: a(1), b(2) and c(9-12). The alpha and beta chains form an alternating ring which encloses part of the gamma chain. CF(1) is attached to CF(0) by a central stalk formed by the gamma and epsilon chains, while a peripheral stalk is formed by the delta and b chains.

Its subcellular location is the cell inner membrane. It catalyses the reaction ATP + H2O + 4 H(+)(in) = ADP + phosphate + 5 H(+)(out). Its function is as follows. Produces ATP from ADP in the presence of a proton gradient across the membrane. The catalytic sites are hosted primarily by the beta subunits. The protein is ATP synthase subunit beta of Brucella abortus (strain 2308).